The sequence spans 167 residues: MTRILGIDPGSRVTGYGIVDDGRPTRLVTEGTLRLPRQAGLAERLGRIFDGLAELIAEHRPQEVALEQVFVHRNADTALKLGHARGAALTACVQAGLPVAEYAPARIKQAIAGSGRADKTQVGYMVRALLRLRTSPAEDAADALAAALCHAHHRSAPLTAATTGARR.

Active-site residues include aspartate 8, glutamate 67, and aspartate 139. Residues aspartate 8, glutamate 67, and aspartate 139 each contribute to the Mg(2+) site.

This sequence belongs to the RuvC family. In terms of assembly, homodimer which binds Holliday junction (HJ) DNA. The HJ becomes 2-fold symmetrical on binding to RuvC with unstacked arms; it has a different conformation from HJ DNA in complex with RuvA. In the full resolvosome a probable DNA-RuvA(4)-RuvB(12)-RuvC(2) complex forms which resolves the HJ. Mg(2+) is required as a cofactor.

The protein resides in the cytoplasm. The enzyme catalyses Endonucleolytic cleavage at a junction such as a reciprocal single-stranded crossover between two homologous DNA duplexes (Holliday junction).. In terms of biological role, the RuvA-RuvB-RuvC complex processes Holliday junction (HJ) DNA during genetic recombination and DNA repair. Endonuclease that resolves HJ intermediates. Cleaves cruciform DNA by making single-stranded nicks across the HJ at symmetrical positions within the homologous arms, yielding a 5'-phosphate and a 3'-hydroxyl group; requires a central core of homology in the junction. The consensus cleavage sequence is 5'-(A/T)TT(C/G)-3'. Cleavage occurs on the 3'-side of the TT dinucleotide at the point of strand exchange. HJ branch migration catalyzed by RuvA-RuvB allows RuvC to scan DNA until it finds its consensus sequence, where it cleaves and resolves the cruciform DNA. This Halorhodospira halophila (strain DSM 244 / SL1) (Ectothiorhodospira halophila (strain DSM 244 / SL1)) protein is Crossover junction endodeoxyribonuclease RuvC.